Reading from the N-terminus, the 744-residue chain is 5-methyltetrahydropteroyltriglutamate--homocysteine methyltransferase (744 aa).

5-methyltetrahydropteroyltri-L-glutamate contacts are provided by residues 17–20 (REVK) and Lys-110. Residues 422 to 424 (IGS) and Glu-475 each bind L-homocysteine. L-methionine contacts are provided by residues 422-424 (IGS) and Glu-475. 5-methyltetrahydropteroyltri-L-glutamate is bound at residue Trp-552. L-homocysteine is bound at residue Asp-590. Asp-590 contacts L-methionine. Glu-596 lines the 5-methyltetrahydropteroyltri-L-glutamate pocket. Residues His-632, Cys-634, and Glu-656 each contribute to the Zn(2+) site. The active-site Proton donor is His-685. Cys-717 is a binding site for Zn(2+).

This sequence belongs to the vitamin-B12 independent methionine synthase family. It depends on Zn(2+) as a cofactor.

The enzyme catalyses 5-methyltetrahydropteroyltri-L-glutamate + L-homocysteine = tetrahydropteroyltri-L-glutamate + L-methionine. Its pathway is amino-acid biosynthesis; L-methionine biosynthesis via de novo pathway; L-methionine from L-homocysteine (MetE route): step 1/1. Functionally, catalyzes the transfer of a methyl group from 5-methyltetrahydrofolate to homocysteine resulting in methionine formation. This Trichodesmium erythraeum (strain IMS101) protein is 5-methyltetrahydropteroyltriglutamate--homocysteine methyltransferase.